The chain runs to 213 residues: Cytokinin riboside 5'-monophosphate phosphoribohydrolase LOG2 (213 aa).

Residues Glu79, 97-98 (RK), 114-120 (GYGTFEE), and Thr126 contribute to the substrate site.

It belongs to the LOG family. As to expression, expressed in roots and shoots. Detected in root hairs.

It is found in the cytoplasm. Its subcellular location is the nucleus. The catalysed reaction is N(6)-(dimethylallyl)adenosine 5'-phosphate + H2O = N(6)-dimethylallyladenine + D-ribose 5-phosphate. It catalyses the reaction 9-ribosyl-trans-zeatin 5'-phosphate + H2O = trans-zeatin + D-ribose 5-phosphate. Functionally, cytokinin-activating enzyme working in the direct activation pathway. Phosphoribohydrolase that converts inactive cytokinin nucleotides to the biologically active free-base forms. The polypeptide is Cytokinin riboside 5'-monophosphate phosphoribohydrolase LOG2 (LOG2) (Arabidopsis thaliana (Mouse-ear cress)).